Here is a 777-residue protein sequence, read N- to C-terminus: Ethylene receptor 4 (777 aa).

A run of 3 helical transmembrane segments spans residues 49–69 (LLIA…ATCA), 77–97 (AVLH…LAAF), and 113–133 (AAKV…LTFI). Positions 88 and 92 each coordinate Cu cation. In terms of domain architecture, GAF spans 184 to 344 (DAHAILRTTA…VVADQAAVAL (161 aa)). The Histidine kinase domain maps to 387–521 (AMCHAMRRPV…NTGSGACRLS (135 aa)). H390 is subject to Phosphohistidine; by autocatalysis. Residues 645–774 (RVLLADDDAM…ALGAQLCRVL (130 aa)) enclose the Response regulatory domain. D696 carries the 4-aspartylphosphate modification.

Belongs to the ethylene receptor family. Cu cation is required as a cofactor.

The protein resides in the endoplasmic reticulum membrane. It carries out the reaction ATP + protein L-histidine = ADP + protein N-phospho-L-histidine.. Functionally, ethylene receptor related to bacterial two-component regulators. Acts as a redundant negative regulator of ethylene signaling. In Oryza sativa subsp. japonica (Rice), this protein is Ethylene receptor 4 (ETR4).